A 369-amino-acid polypeptide reads, in one-letter code: Succinyl-diaminopimelate desuccinylase (369 aa).

Position 77 (H77) interacts with Zn(2+). The active site involves D79. Zn(2+) is bound at residue D103. The active-site Proton acceptor is E136. 3 residues coordinate Zn(2+): E137, E165, and H345.

It belongs to the peptidase M20A family. It depends on Zn(2+) as a cofactor. Co(2+) serves as cofactor.

The enzyme catalyses N-succinyl-(2S,6S)-2,6-diaminopimelate + H2O = (2S,6S)-2,6-diaminopimelate + succinate. It functions in the pathway amino-acid biosynthesis; L-lysine biosynthesis via DAP pathway; LL-2,6-diaminopimelate from (S)-tetrahydrodipicolinate (succinylase route): step 3/3. The polypeptide is Succinyl-diaminopimelate desuccinylase (dapE) (Corynebacterium glutamicum (strain ATCC 13032 / DSM 20300 / JCM 1318 / BCRC 11384 / CCUG 27702 / LMG 3730 / NBRC 12168 / NCIMB 10025 / NRRL B-2784 / 534)).